Here is a 197-residue protein sequence, read N- to C-terminus: Probable host range protein 2 (197 aa).

The tract at residues 172-197 (DHDDNDNADDDEEDDDEVNDIEDDYE) is disordered. Positions 174 to 197 (DDNDNADDDEEDDDEVNDIEDDYE) are enriched in acidic residues.

The protein belongs to the poxviridae C7 protein family.

In Ovis aries (Sheep), this protein is Probable host range protein 2.